The chain runs to 431 residues: Large envelope protein (431 aa).

A lipid anchor (N-myristoyl glycine; by host) is attached at G2. Residues 2–148 (GNNIKVTFNP…PPLRDTHPHL (147 aa)) are pre-S1. The tract at residues 2-207 (GNNIKVTFNP…PSTTGDPALS (206 aa)) is pre-S. The Virion surface; in external conformation portion of the chain corresponds to 2 to 214 (GNNIKVTFNP…ALSPEMSPSS (213 aa)). Residues 2-286 (GNNIKVTFNP…NGFRWMYLRR (285 aa)) lie on the Intravirion; in internal conformation side of the membrane. N3 is a glycosylation site (N-linked (GlcNAc...) asparagine). Positions 115–147 (IPRGLVPPQTPTNRDQGRKPTPPTPPLRDTHPH) are disordered. The interval 149–207 (TMKNQTFHLQGFVDGLRDLTTTERQHNAYGDPFTTLSPAVPTVSTILSPPSTTGDPALS) is pre-S2. A helical membrane pass occupies residues 215–235 (LLGLLAGLQVVYFLWTKILTI). Residues 236 to 286 (AQNLDWWWTSLSFPGGIPECTGQNSQFQTCKHLPTSCPPTCNGFRWMYLRR) are Intravirion; in external conformation-facing. Residues 287 to 307 (FIIYLLVLLLCLIFLLVLLDW) traverse the membrane as a helical segment. Residues 308–379 (KGFIPVCPLQ…WALARFSWLN (72 aa)) lie on the Virion surface side of the membrane. An N-linked (GlcNAc...) asparagine; by host glycan is attached at N351. Residues 380–400 (LLVPLLQWLGGISLIAWFLLI) traverse the membrane as a helical segment. The Intravirion portion of the chain corresponds to 401 to 406 (WMIWFW). Residues 407-429 (GPALLSILPPFIPIFVLFFLIWV) traverse the membrane as a helical segment. The Virion surface segment spans residues 430–431 (YI).

Belongs to the orthohepadnavirus major surface antigen family. In its internal form (Li-HBsAg), interacts with the capsid protein and with the isoform S. Interacts with host chaperone CANX. As to quaternary structure, associates with host chaperone CANX through its pre-S2 N glycan; this association may be essential for isoform M proper secretion. In terms of assembly, interacts with isoform L. Interacts with the antigens of satellite virus HDV (HDVAgs); this interaction is required for encapsidation of HDV genomic RNA. In terms of processing, isoform M is N-terminally acetylated by host at a ratio of 90%, and N-glycosylated by host at the pre-S2 region. Myristoylated.

Its subcellular location is the virion membrane. In terms of biological role, the large envelope protein exists in two topological conformations, one which is termed 'external' or Le-HBsAg and the other 'internal' or Li-HBsAg. In its external conformation the protein attaches the virus to cell receptors and thereby initiating infection. This interaction determines the species specificity and liver tropism. This attachment induces virion internalization predominantly through caveolin-mediated endocytosis. The large envelope protein also assures fusion between virion membrane and endosomal membrane. In its internal conformation the protein plays a role in virion morphogenesis and mediates the contact with the nucleocapsid like a matrix protein. Its function is as follows. The middle envelope protein plays an important role in the budding of the virion. It is involved in the induction of budding in a nucleocapsid independent way. In this process the majority of envelope proteins bud to form subviral lipoprotein particles of 22 nm of diameter that do not contain a nucleocapsid. This is Large envelope protein from Marmota monax (Woodchuck).